Here is a 138-residue protein sequence, read N- to C-terminus: Large ribosomal subunit protein uL16 (138 aa).

A compositionally biased stretch (basic residues) spans 1 to 13 (MLQPKRRKYRKEQ). The tract at residues 1–20 (MLQPKRRKYRKEQKGRNTGI) is disordered.

This sequence belongs to the universal ribosomal protein uL16 family. As to quaternary structure, part of the 50S ribosomal subunit.

Binds 23S rRNA and is also seen to make contacts with the A and possibly P site tRNAs. This is Large ribosomal subunit protein uL16 from Paraburkholderia phytofirmans (strain DSM 17436 / LMG 22146 / PsJN) (Burkholderia phytofirmans).